A 414-amino-acid chain; its full sequence is Tryptophan synthase beta chain (414 aa).

Lysine 108 bears the N6-(pyridoxal phosphate)lysine mark.

It belongs to the TrpB family. As to quaternary structure, tetramer of two alpha and two beta chains. The cofactor is pyridoxal 5'-phosphate.

The catalysed reaction is (1S,2R)-1-C-(indol-3-yl)glycerol 3-phosphate + L-serine = D-glyceraldehyde 3-phosphate + L-tryptophan + H2O. It participates in amino-acid biosynthesis; L-tryptophan biosynthesis; L-tryptophan from chorismate: step 5/5. The beta subunit is responsible for the synthesis of L-tryptophan from indole and L-serine. This Beijerinckia indica subsp. indica (strain ATCC 9039 / DSM 1715 / NCIMB 8712) protein is Tryptophan synthase beta chain.